The chain runs to 84 residues: Three-finger toxin 3FTx-1 (84 aa).

The first 21 residues, 1–21, serve as a signal peptide directing secretion; it reads MKTLLLTLVVVTIVCLDLGNS. 4 cysteine pairs are disulfide-bonded: cysteine 24/cysteine 41, cysteine 34/cysteine 59, cysteine 63/cysteine 71, and cysteine 72/cysteine 77. Asparagine 78 is a glycosylation site (N-linked (GlcNAc...) asparagine).

It belongs to the three-finger toxin family. Short-chain subfamily. As to expression, expressed by the venom gland.

The protein localises to the secreted. The protein is Three-finger toxin 3FTx-1 of Micrurus corallinus (Brazilian coral snake).